Here is a 600-residue protein sequence, read N- to C-terminus: Alanine--tRNA ligase (600 aa).

Zn(2+)-binding residues include histidine 463, histidine 467, cysteine 565, and histidine 569.

It belongs to the class-II aminoacyl-tRNA synthetase family. Requires Zn(2+) as cofactor.

Its subcellular location is the cytoplasm. It carries out the reaction tRNA(Ala) + L-alanine + ATP = L-alanyl-tRNA(Ala) + AMP + diphosphate. Its function is as follows. Catalyzes the attachment of alanine to tRNA(Ala) in a two-step reaction: alanine is first activated by ATP to form Ala-AMP and then transferred to the acceptor end of tRNA(Ala). Also edits incorrectly charged Ser-tRNA(Ala) and Gly-tRNA(Ala) via its editing domain. In Treponema denticola (strain ATCC 35405 / DSM 14222 / CIP 103919 / JCM 8153 / KCTC 15104), this protein is Alanine--tRNA ligase (alaS).